Consider the following 542-residue polypeptide: Trans-alpha-bergamotene synthase (542 aa).

Mg(2+)-binding residues include aspartate 295, aspartate 299, aspartate 439, threonine 443, and glutamate 447. Positions 295–299 match the DDXXD motif motif; it reads DDFYD.

This sequence belongs to the terpene synthase family. It depends on Mg(2+) as a cofactor.

It carries out the reaction (2E,6E)-farnesyl diphosphate = (1S,5S,6R)-alpha-bergamotene + diphosphate. Its pathway is secondary metabolite biosynthesis; terpenoid biosynthesis. In terms of biological role, sesquiterpene synthase converting farnesyl diphosphate to trans-alpha-bergamotene as the major product. The polypeptide is Trans-alpha-bergamotene synthase (Phyla dulcis (Aztec sweet herb)).